The primary structure comprises 185 residues: Probable chorismate pyruvate-lyase 1 (185 aa).

Residues Arg70, Leu108, and Glu166 each coordinate substrate.

Belongs to the UbiC family.

Its subcellular location is the cytoplasm. It carries out the reaction chorismate = 4-hydroxybenzoate + pyruvate. Its pathway is cofactor biosynthesis; ubiquinone biosynthesis. Removes the pyruvyl group from chorismate, with concomitant aromatization of the ring, to provide 4-hydroxybenzoate (4HB) for the ubiquinone pathway. The polypeptide is Probable chorismate pyruvate-lyase 1 (Pseudomonas fluorescens (strain Pf0-1)).